We begin with the raw amino-acid sequence, 1072 residues long: DNA-directed RNA polymerase subunit beta (1072 aa).

Belongs to the RNA polymerase beta chain family. In plastids the minimal PEP RNA polymerase catalytic core is composed of four subunits: alpha, beta, beta', and beta''. When a (nuclear-encoded) sigma factor is associated with the core the holoenzyme is formed, which can initiate transcription.

Its subcellular location is the plastid. The protein resides in the chloroplast. The catalysed reaction is RNA(n) + a ribonucleoside 5'-triphosphate = RNA(n+1) + diphosphate. Functionally, DNA-dependent RNA polymerase catalyzes the transcription of DNA into RNA using the four ribonucleoside triphosphates as substrates. This chain is DNA-directed RNA polymerase subunit beta, found in Amborella trichopoda.